The chain runs to 473 residues: Ribulose bisphosphate carboxylase large chain 1 (473 aa).

The substrate site is built by asparagine 116 and threonine 166. Lysine 168 functions as the Proton acceptor in the catalytic mechanism. Substrate is bound at residue lysine 170. Mg(2+)-binding residues include lysine 194, aspartate 196, and glutamate 197. At lysine 194 the chain carries N6-carboxylysine. Histidine 287 (proton acceptor) is an active-site residue. Residues arginine 288, histidine 320, and serine 372 each contribute to the substrate site.

This sequence belongs to the RuBisCO large chain family. Type I subfamily. Heterohexadecamer of 8 large chains and 8 small chains. Mg(2+) is required as a cofactor.

It carries out the reaction 2 (2R)-3-phosphoglycerate + 2 H(+) = D-ribulose 1,5-bisphosphate + CO2 + H2O. The catalysed reaction is D-ribulose 1,5-bisphosphate + O2 = 2-phosphoglycolate + (2R)-3-phosphoglycerate + 2 H(+). RuBisCO catalyzes two reactions: the carboxylation of D-ribulose 1,5-bisphosphate, the primary event in carbon dioxide fixation, as well as the oxidative fragmentation of the pentose substrate. Both reactions occur simultaneously and in competition at the same active site. This Acidithiobacillus ferrooxidans (strain ATCC 23270 / DSM 14882 / CIP 104768 / NCIMB 8455) (Ferrobacillus ferrooxidans (strain ATCC 23270)) protein is Ribulose bisphosphate carboxylase large chain 1.